Reading from the N-terminus, the 304-residue chain is Protein Largen (304 aa).

Residues 1–13 are compositionally biased toward polar residues; sequence MSAKSKGNPSSSC. Disordered regions lie at residues 1–27, 66–91, 114–160, and 239–304; these read MSAK…TKVK, QLED…TASS, LTVL…GGLP, and HPPG…TTTV. Residues 33 to 70 adopt a coiled-coil conformation; sequence IVEDLELVLGDLKDVAKELKEVVDQIDTLTSDLQLEDE. Residues 77–91 are compositionally biased toward low complexity; that stretch reads TDTLNSSSSGTTASS. Pro residues-rich tracts occupy residues 120–129, 239–261, and 277–289; these read PNPPPPPPRL, HPPG…PPFP, and PIRP…PTAP.

Regulator of cell size that promotes cell size increase independently of mTOR and Hippo signaling pathways. Acts by stimulating the translation of specific mRNAs, including those encoding proteins affecting mitochondrial functions. Increases mitochondrial mass and respiration. The polypeptide is Protein Largen (PRR16) (Homo sapiens (Human)).